Consider the following 287-residue polypeptide: Large ribosomal subunit protein uL2 (287 aa).

The interval 221–287 is disordered; the sequence is RGSVMNPCDH…SKRSRGGRDS (67 aa). Over residues 258–287 the composition is skewed to basic residues; it reads KTRKRNKPSNKFVLRKRRKTSKRSRGGRDS.

The protein belongs to the universal ribosomal protein uL2 family. As to quaternary structure, part of the 50S ribosomal subunit. Forms a bridge to the 30S subunit in the 70S ribosome.

In terms of biological role, one of the primary rRNA binding proteins. Required for association of the 30S and 50S subunits to form the 70S ribosome, for tRNA binding and peptide bond formation. It has been suggested to have peptidyltransferase activity; this is somewhat controversial. Makes several contacts with the 16S rRNA in the 70S ribosome. This Synechococcus sp. (strain CC9311) protein is Large ribosomal subunit protein uL2.